The sequence spans 257 residues: Hydroxyacylglutathione hydrolase (257 aa).

Residues histidine 55, histidine 57, aspartate 59, histidine 60, histidine 112, aspartate 129, and histidine 167 each contribute to the Zn(2+) site.

This sequence belongs to the metallo-beta-lactamase superfamily. Glyoxalase II family. Monomer. It depends on Zn(2+) as a cofactor.

The catalysed reaction is an S-(2-hydroxyacyl)glutathione + H2O = a 2-hydroxy carboxylate + glutathione + H(+). The protein operates within secondary metabolite metabolism; methylglyoxal degradation; (R)-lactate from methylglyoxal: step 2/2. Thiolesterase that catalyzes the hydrolysis of S-D-lactoyl-glutathione to form glutathione and D-lactic acid. This is Hydroxyacylglutathione hydrolase from Pseudoalteromonas translucida (strain TAC 125).